The chain runs to 143 residues: Large ribosomal subunit protein uL11 (143 aa).

Belongs to the universal ribosomal protein uL11 family. Part of the ribosomal stalk of the 50S ribosomal subunit. Interacts with L10 and the large rRNA to form the base of the stalk. L10 forms an elongated spine to which L12 dimers bind in a sequential fashion forming a multimeric L10(L12)X complex. In terms of processing, one or more lysine residues are methylated.

Its function is as follows. Forms part of the ribosomal stalk which helps the ribosome interact with GTP-bound translation factors. The polypeptide is Large ribosomal subunit protein uL11 (Psychrobacter sp. (strain PRwf-1)).